The chain runs to 459 residues: Cysteine--tRNA ligase (459 aa).

Zn(2+) is bound at residue Cys28. A 'HIGH' region motif is present at residues 30–40; that stretch reads VTVYDLCHFGH. Residues Cys209, His234, and Glu238 each coordinate Zn(2+). Positions 266 to 270 match the 'KMSKS' region motif; it reads KMSKS. Lys269 contacts ATP.

This sequence belongs to the class-I aminoacyl-tRNA synthetase family. In terms of assembly, monomer. The cofactor is Zn(2+).

The protein localises to the cytoplasm. It catalyses the reaction tRNA(Cys) + L-cysteine + ATP = L-cysteinyl-tRNA(Cys) + AMP + diphosphate. The protein is Cysteine--tRNA ligase of Glaesserella parasuis serovar 5 (strain SH0165) (Haemophilus parasuis).